The sequence spans 917 residues: Hexokinase-1 (917 aa).

Position 1 is an N-acetylmethionine (Met-1). The tract at residues 1-10 is mitochondrial-binding peptide (MBP); it reads MIAAQLLAYY. 2 Hexokinase domains span residues 16-458 and 464-906; these read DDQV…MVTA and AEQH…LITA. Residues Arg-30 and 84 to 89 each bind ATP; that span reads DLGGSS. The tract at residues 73–207 is hexokinase small subdomain 1; sequence DGSEKGDFIA…DYDANIVAVV (135 aa). Residue 84–91 coordinates D-glucose 6-phosphate; that stretch reads DLGGSSFR. D-glucose is bound by residues Ser-155, 172 to 173, and 208 to 209; these read TK and ND. The interval 208-447 is hexokinase large subdomain 1; sequence NDTVGTMMTC…SDVRFLLSES (240 aa). 2 residues coordinate D-glucose 6-phosphate: Asp-209 and Thr-232. D-glucose contacts are provided by residues Asn-235, Glu-260, and 291–294; that span reads QLFE. A Phosphoserine modification is found at Ser-337. Residue Asn-345 participates in ATP binding. Residue 413–415 coordinates D-glucose 6-phosphate; that stretch reads DGS. Position 425–426 (425–426) interacts with ATP; that stretch reads RR. Residues Ser-449 and 532–536 contribute to the D-glucose 6-phosphate site; that span reads DLGGT. Positions 521-655 are hexokinase small subdomain 2; that stretch reads DGTENGDFLA…EFDLDVVAVV (135 aa). Residue 532 to 537 coordinates ATP; the sequence is DLGGTN. Residues 603 to 604, 620 to 621, and 656 to 657 each bind D-glucose; these read SF, TK, and ND. Residues 656–895 are hexokinase large subdomain 2; that stretch reads NDTVGTMMTC…CNVSFLLSED (240 aa). D-glucose 6-phosphate contacts are provided by Asp-657 and Thr-680. Position 680 (Thr-680) interacts with ATP. D-glucose is bound by residues 682–683, Glu-708, and Glu-742; that span reads SN. Residues 747–748, 784–788, and 863–867 contribute to the ATP site; these read GM, TKFLS, and TLYKL. D-glucose 6-phosphate contacts are provided by residues 861–863 and Ser-897; that span reads DGT.

The protein belongs to the hexokinase family. In terms of assembly, monomer. Interacts with RABL2/RABL2A; binds preferentially to GTP-bound RABL2. Interacts with VDAC1. The HK1-VDAC1 complex interacts with ATF2. Interacts (via N-terminal spermatogenic cell-specific region) with PFKM (via C-terminus). Interacts with SMAD5.

Its subcellular location is the mitochondrion outer membrane. It is found in the cytoplasm. The protein resides in the cytosol. It catalyses the reaction a D-hexose + ATP = a D-hexose 6-phosphate + ADP + H(+). The catalysed reaction is D-fructose + ATP = D-fructose 6-phosphate + ADP + H(+). It carries out the reaction D-glucose + ATP = D-glucose 6-phosphate + ADP + H(+). The enzyme catalyses D-mannose + ATP = D-mannose 6-phosphate + ADP + H(+). It catalyses the reaction D-glucosamine + ATP = D-glucosamine 6-phosphate + ADP + H(+). It participates in carbohydrate metabolism; hexose metabolism. Its pathway is carbohydrate degradation; glycolysis; D-glyceraldehyde 3-phosphate and glycerone phosphate from D-glucose: step 1/4. With respect to regulation, hexokinase is an allosteric enzyme inhibited by its product D-glucose 6-phosphate. Hexokinase activity is inhibited by N-acetyl-D-glucosamine. Functionally, catalyzes the phosphorylation of various hexoses, such as D-glucose, D-glucosamine, D-fructose, D-mannose and 2-deoxy-D-glucose, to hexose 6-phosphate (D-glucose 6-phosphate, D-glucosamine 6-phosphate, D-fructose 6-phosphate, D-mannose 6-phosphate and 2-deoxy-D-glucose 6-phosphate, respectively). Does not phosphorylate N-acetyl-D-glucosamine. Mediates the initial step of glycolysis by catalyzing phosphorylation of D-glucose to D-glucose 6-phosphate. Involved in innate immunity and inflammation by acting as a pattern recognition receptor for bacterial peptidoglycan. When released in the cytosol, N-acetyl-D-glucosamine component of bacterial peptidoglycan inhibits the hexokinase activity of HK1 and causes its dissociation from mitochondrial outer membrane, thereby activating the NLRP3 inflammasome. The protein is Hexokinase-1 of Pongo abelii (Sumatran orangutan).